A 541-amino-acid polypeptide reads, in one-letter code: Tyrosine-protein phosphatase non-receptor type 5 (541 aa).

The interval 1–55 is disordered; it reads MCCSERLLGLPQPVEMEAPDEAEGLPSKQKEMPPPPPPSPPSEPAQKLPPQGAGS. Over residues 32–43 the composition is skewed to pro residues; it reads MPPPPPPSPPSE. The next 2 membrane-spanning stretches (helical) occupy residues 64–84 and 122–142; these read LCLFAASQFLLACGVLWLSGH and LLLVSLTVSLVIVTTLVWHLL. The residue at position 221 (S221) is a Phosphoserine; by PKA. Phosphothreonine; by MAPK is present on T231. S244 bears the Phosphoserine; by MAPK mark. The Tyrosine-protein phosphatase domain occupies 276–531; it reads LQAEFFEIPM…QFVHHAMSLY (256 aa). Substrate contacts are provided by residues D437, 472–478, and Q516; that span reads CSAGIGR. C472 (phosphocysteine intermediate) is an active-site residue.

The protein belongs to the protein-tyrosine phosphatase family. Non-receptor class subfamily. In terms of processing, phosphorylation at Ser-221 by PKA deactivates PTPN5. Phosphorylation at Thr-231 and Ser-244 by MAPKs stabilizes the phosphatase, dephosphorylation of these sites results in ubiquitin-mediated degradation of the active phosphatase. As to expression, STEP20 is expressed only in the CNS.

Its subcellular location is the endoplasmic reticulum membrane. The protein localises to the cytoplasm. The enzyme catalyses O-phospho-L-tyrosyl-[protein] + H2O = L-tyrosyl-[protein] + phosphate. May regulate the activity of several effector molecules involved in synaptic plasticity and neuronal cell survival, including MAPKs, Src family kinases and NMDA receptors. In Mus musculus (Mouse), this protein is Tyrosine-protein phosphatase non-receptor type 5 (Ptpn5).